Consider the following 180-residue polypeptide: Large ribosomal subunit protein uL5 (180 aa).

It belongs to the universal ribosomal protein uL5 family. In terms of assembly, part of the 50S ribosomal subunit; part of the 5S rRNA/L5/L18/L25 subcomplex. Contacts the 5S rRNA and the P site tRNA. Forms a bridge to the 30S subunit in the 70S ribosome.

This is one of the proteins that bind and probably mediate the attachment of the 5S RNA into the large ribosomal subunit, where it forms part of the central protuberance. In the 70S ribosome it contacts protein S13 of the 30S subunit (bridge B1b), connecting the 2 subunits; this bridge is implicated in subunit movement. Contacts the P site tRNA; the 5S rRNA and some of its associated proteins might help stabilize positioning of ribosome-bound tRNAs. This chain is Large ribosomal subunit protein uL5, found in Xanthomonas campestris pv. campestris (strain 8004).